A 347-amino-acid chain; its full sequence is Probable replication factor C subunit 5 (347 aa).

Residue 64–71 participates in ATP binding; sequence GPPGTGKT.

It belongs to the activator 1 small subunits family. Heteropentamer of various rfc subunits that forms a complex (RFC) with PCNA in the presence of ATP.

The protein localises to the nucleus. The elongation of primed DNA templates by DNA polymerase delta and epsilon requires the action of the accessory proteins PCNA and activator 1. The protein is Probable replication factor C subunit 5 (rfc5) of Dictyostelium discoideum (Social amoeba).